Reading from the N-terminus, the 385-residue chain is S-type anion channel SLAH1 (385 aa).

Residues 1 to 42 (MEIPRQEIHIEIDNSIPSSKEFKTGLADAKPVVLMSALRSLH) lie on the Cytoplasmic side of the membrane. A helical membrane pass occupies residues 43 to 65 (AGYFRISLSLCSQALLWKIMIAP). Topologically, residues 66–81 (ESPSMSHMHSKLPSMA) are extracellular. The chain crosses the membrane as a helical span at residues 82-102 (FHLLWYLALVTQVSLCFLYAL). Topologically, residues 103–114 (KCIFFFDKVKEE) are cytoplasmic. Residues 115-135 (FLHYIGVNYLYAPSISWLLML) form a helical membrane-spanning segment. The Extracellular segment spans residues 136–150 (QSAPMMEPNSVLYQT). A helical transmembrane segment spans residues 151-171 (LFWIFAVPVLTLDIKLYGQWF). Residues 172 to 176 (TTEKR) are Cytoplasmic-facing. The helical transmembrane segment at 177-197 (FLSMLANPASQVSVIANLVAA) threads the bilayer. At 198–207 (RGAAEMGWNE) the chain is on the extracellular side. A helical transmembrane segment spans residues 208-228 (CALCMFSLGMVHYLVIFVTLY). Residues 229 to 243 (QRLPGGNNFPAKLRP) lie on the Cytoplasmic side of the membrane. The helical transmembrane segment at 244–264 (IFFLFVAAPAMASLAWNSICG) threads the bilayer. Position 265 (Thr-265) is a topological domain, extracellular. The chain crosses the membrane as a helical span at residues 266-286 (FDAVAKMLFFLSLFIFMSLVC). The Cytoplasmic segment spans residues 287-299 (RPNLFKKSMKRFN). A helical transmembrane segment spans residues 300–320 (VAWWAYSFPLTFLALDSVQYA). Topologically, residues 321–330 (QEVKDPVGSG) are extracellular. The helical transmembrane segment at 331–351 (LMLIFSSISVLIFLGMMVLTA) threads the bilayer. Over 352 to 385 (ANSNRLLRHDPVLGSATDPKDKQKTLSLNATNQN) the chain is Cytoplasmic. Positions 366 to 385 (SATDPKDKQKTLSLNATNQN) are disordered. The segment covering 376 to 385 (TLSLNATNQN) has biased composition (polar residues).

The protein belongs to the SLAC1 S-type anion channel family. In terms of assembly, homotrimer. As to expression, expressed in the vascular systems of root.

It is found in the cell membrane. Slow, weak voltage-dependent S-type anion efflux channel involved in maintenance of anion homeostasis. The polypeptide is S-type anion channel SLAH1 (SLAH1) (Arabidopsis thaliana (Mouse-ear cress)).